Here is a 176-residue protein sequence, read N- to C-terminus: Putative REP-associated tyrosine transposase (176 aa).

2 residues coordinate Mg(2+): His-59 and His-61. The active-site Nucleophile is the Tyr-148.

This sequence belongs to the transposase 17 family. RAYT subfamily. In terms of assembly, homodimer. Mg(2+) is required as a cofactor.

In terms of biological role, transposase responsible for transposition an insertion sequence (IS) element. Transposition occurs in 2 main steps, excision from the donor DNA 'top strand' into a single strand circle and its subsequent reinsertion into the DNA target. This increases the copy number of the IS. The polypeptide is Putative REP-associated tyrosine transposase (Haemophilus influenzae (strain ATCC 51907 / DSM 11121 / KW20 / Rd)).